The sequence spans 487 residues: Cyclic AMP-dependent transcription factor ATF-2 (487 aa).

The C2H2-type zinc finger occupies 7-31; the sequence is FLCTAPGCGQRFTNEDHLAVHKHKH. Residue T34 is modified to Phosphothreonine; by PKC/PRKCH. At S44 the chain carries Phosphoserine; by VRK1. Phosphothreonine occurs at positions 51 and 53. Residue T55 is modified to Phosphothreonine; by VRK1. Phosphoserine occurs at positions 72 and 94. T98 bears the Phosphothreonine mark. S103 bears the Phosphoserine; by PKC/PRKCA and PKC/PRKCB mark. 2 disordered regions span residues 107–130 and 241–355; these read EPSV…TNDE and PGIP…RQKR. S118 is subject to Phosphoserine. The span at 264-275 shows a compositional bias: polar residues; sequence LTQQHPPVTNGD. Residues 278–281 are essential for its histone acetyltransferase activity; that stretch reads KGHG. A compositionally biased stretch (low complexity) spans 300–316; sequence PATSTTETPASPAHTTP. S310 carries the post-translational modification Phosphoserine. S322 is subject to Phosphoserine; by PKC/PRKCA and PKC/PRKCB. A compositionally biased stretch (basic and acidic residues) spans 328 to 345; it reads AANEDPDEKRRKFLERNR. The bZIP domain occupies 334–397; it reads DEKRRKFLER…AQLKQLLLAH (64 aa). The tract at residues 336–356 is basic motif; it reads KRRKFLERNRAAASRCRQKRK. Position 339 is an N6-acetyllysine (K339). A Phosphoserine; by PKC/PRKCA and PKC/PRKCB modification is found at S349. Position 356 is an N6-acetyllysine (K356). Residues 362 to 390 form a leucine-zipper region; that stretch reads LEKKAEDLSSLNGQLQSEVTLLRNEVAQL. A Nuclear export signal motif is present at residues 387-396; that stretch reads VAQLKQLLLA. Residues 407–487 form a disordered region; that stretch reads KKSGYHTADK…PSSQAQPSGS (81 aa). Phosphoserine is present on residues S424 and S428. The span at 425-436 shows a compositional bias: polar residues; sequence VPSSPHTEAIQH. Positions 437-449 are enriched in low complexity; it reads SSVSTSNGVSSTS. The segment covering 457-470 has biased composition (polar residues); it reads SVLTQMADQSTEPA. 2 positions are modified to phosphoserine; by ATM: S472 and S480. A compositionally biased stretch (polar residues) spans 478-487; it reads PSSQAQPSGS.

Belongs to the bZIP family. ATF subfamily. Binds DNA as a dimer and can form a homodimer in the absence of DNA. Can form a heterodimer with JUN. Heterodimerization is essential for its transcriptional activity. Interacts with SMAD3 and SMAD4. Binds through its N-terminal region to UTF1 which acts as a coactivator of ATF2 transcriptional activity. Interacts with the HK1/VDAC1 complex. Interacts with NBN, MRE11, XPO1, KAT5 and CUL3. Post-translationally, phosphorylation of Thr-51 by MAPK14 and MAPK11, and at Thr-53 by MAPK1/ERK2, MAPK3/ERK1, MAPK11, MAPK12 and MAPK14 in response to external stimulus like insulin causes increased transcriptional activity. Phosphorylated by PLK3 following hyperosmotic stress. Also phosphorylated and activated by JNK and CaMK4. ATM-mediated phosphorylation at Ser-472 and Ser-480 stimulates its function in DNA damage response. Phosphorylation at Ser-44, Thr-55 and Ser-103 activates its transcriptional activity. Phosphorylation at Thr-51 or Thr-53 enhances acetylation of histones H2B and H4.

Its subcellular location is the nucleus. The protein localises to the cytoplasm. The protein resides in the mitochondrion outer membrane. Functionally, transcriptional activator which regulates the transcription of various genes, including those involved in anti-apoptosis, cell growth, and DNA damage response. Dependent on its binding partner, binds to CRE (cAMP response element) consensus sequences (5'-TGACGTCA-3') or to AP-1 (activator protein 1) consensus sequences (5'-TGACTCA-3'). In the nucleus, contributes to global transcription and the DNA damage response, in addition to specific transcriptional activities that are related to cell development, proliferation and death. In the cytoplasm, interacts with and perturbs HK1- and VDAC1-containing complexes at the mitochondrial outer membrane, thereby impairing mitochondrial membrane potential, inducing mitochondrial leakage and promoting cell death. The phosphorylated form (mediated by ATM) plays a role in the DNA damage response and is involved in the ionizing radiation (IR)-induced S phase checkpoint control and in the recruitment of the MRN complex into the IR-induced foci (IRIF). Exhibits histone acetyltransferase (HAT) activity which specifically acetylates histones H2B and H4 in vitro. In concert with CUL3 and RBX1, promotes the degradation of KAT5 thereby attenuating its ability to acetylate and activate ATM. Can elicit oncogenic or tumor suppressor activities depending on the tissue or cell type. The sequence is that of Cyclic AMP-dependent transcription factor ATF-2 (Atf2) from Rattus norvegicus (Rat).